Reading from the N-terminus, the 248-residue chain is Probable transcriptional regulatory protein FTF0655 (248 aa).

This sequence belongs to the TACO1 family.

It is found in the cytoplasm. This is Probable transcriptional regulatory protein FTF0655 from Francisella tularensis subsp. tularensis (strain FSC 198).